Here is an 86-residue protein sequence, read N- to C-terminus: Large ribosomal subunit protein eL31 (86 aa).

The protein belongs to the eukaryotic ribosomal protein eL31 family.

This is Large ribosomal subunit protein eL31 from Methanopyrus kandleri (strain AV19 / DSM 6324 / JCM 9639 / NBRC 100938).